The sequence spans 333 residues: Protein SEEDLING LETHAL 1, chloroplastic (333 aa).

The transit peptide at 1-55 directs the protein to the chloroplast; sequence MQQEALSFLSSSLPSLHHNFPSLSRLRFNNFPALSFKPNTSSSSSSFFKSPDIPS. The interval 38 to 67 is disordered; sequence PNTSSSSSSFFKSPDIPSLSSTTTTTTTTE.

The protein belongs to the mTERF family. In terms of assembly, self-interacts. Associates with the plastid-encoded RNA polymerase (PEP) complex. Interacts directly with PTAC7/PAP12, PTAC12/HMR/PAP5 and PTAC14/PAP7. In terms of tissue distribution, expressed in green aerial tissues such as cotyledons, leaves, flowers and siliques, but not in roots.

It localises to the plastid. Its subcellular location is the chloroplast stroma. The protein resides in the chloroplast nucleoid. Transcription termination factor required for chloroplast gene expression and protein synthesis in chloroplasts. Necessary for chloroplast photosynthetic complexes assembly by modulating the accumulation of photosynthetic proteins. Essential for embryogenesis. The protein is Protein SEEDLING LETHAL 1, chloroplastic of Arabidopsis thaliana (Mouse-ear cress).